A 545-amino-acid polypeptide reads, in one-letter code: Reticulon-2 (545 aa).

2 disordered regions span residues 1–183 (MGQV…ETGE) and 199–250 (SPEV…EREP). Positions 14–25 (APSTASSTPDST) are enriched in low complexity. Basic and acidic residues predominate over residues 32–43 (SDFRELHTAREF). S44 carries the phosphoserine modification. Residues 135-146 (RPLEDLRLRLDH) show a composition bias toward basic and acidic residues. The segment covering 157 to 166 (GEDSSTSSST) has biased composition (low complexity). The segment covering 199–230 (SPEVLTPQLSPGSGTPQAGTPSPSRSRDSNSG) has biased composition (polar residues). Phosphoserine occurs at positions 227 and 229. Residues 345–545 (VADLLYWKDT…AVSGSKAKAE (201 aa)) form the Reticulon domain. The next 2 helical transmembrane spans lie at 368-388 (LLCL…LLLL) and 463-483 (LLFY…LLIL).

Interacts with isoform 1 but not isoform 3 of SPAST. Interacts with BACE1. Interacts (via first transmembrane domain) with ARL6IP5/GTRAP3-18. Interacts (via N-terminus) with SLC1A1/EAAC1; the interaction promotes cell surface expression of SLC1A1. In terms of assembly, interacts with TMEM33. In terms of tissue distribution, highly expressed in skeletal muscle.

The protein localises to the endoplasmic reticulum membrane. It localises to the sarcoplasmic reticulum membrane. It is found in the cell membrane. Its subcellular location is the sarcolemma. The protein resides in the T-tubule. The protein localises to the cytoplasm. It localises to the myofibril. It is found in the sarcomere. Its subcellular location is the z line. The protein resides in the cytoskeleton. In terms of biological role, inhibits amyloid precursor protein processing, probably by blocking BACE1 activity. Enhances trafficking of the glutamate transporter SLC1A1/EAAC1 from the endoplasmic reticulum to the cell surface. Plays a role in the translocation of SLC2A4/GLUT4 from intracellular membranes to the cell membrane which facilitates the uptake of glucose into the cell. This chain is Reticulon-2 (RTN2), found in Homo sapiens (Human).